The primary structure comprises 277 residues: Large ribosomal subunit protein uL2 (277 aa).

Residues 199–277 form a disordered region; it reads DHMNTSIGKA…ILLSRHKRKK (79 aa). Positions 209–220 are enriched in basic residues; sequence GRNRWLGRKPHN.

This sequence belongs to the universal ribosomal protein uL2 family. As to quaternary structure, part of the 50S ribosomal subunit. Forms a bridge to the 30S subunit in the 70S ribosome.

One of the primary rRNA binding proteins. Required for association of the 30S and 50S subunits to form the 70S ribosome, for tRNA binding and peptide bond formation. It has been suggested to have peptidyltransferase activity; this is somewhat controversial. Makes several contacts with the 16S rRNA in the 70S ribosome. The sequence is that of Large ribosomal subunit protein uL2 from Bradyrhizobium diazoefficiens (strain JCM 10833 / BCRC 13528 / IAM 13628 / NBRC 14792 / USDA 110).